The chain runs to 468 residues: Chitoporin (468 aa).

The first 32 residues, 1–32, serve as a signal peptide directing secretion; that stretch reads MRTFSGKRSTLALAIAGVTAMSGFMAMPEARA.

This sequence belongs to the outer membrane porin (Opr) (TC 1.B.25) family.

The protein resides in the cell outer membrane. Involved in the uptake of chitosugars. This Escherichia coli (strain K12) protein is Chitoporin (chiP).